Reading from the N-terminus, the 626-residue chain is tRNA uridine 5-carboxymethylaminomethyl modification enzyme MnmG (626 aa).

13-18 lines the FAD pocket; sequence GGGHAG. 273–287 lines the NAD(+) pocket; the sequence is GPRYCPSIEDKIHRF.

It belongs to the MnmG family. Homodimer. Heterotetramer of two MnmE and two MnmG subunits. FAD is required as a cofactor.

It is found in the cytoplasm. Its function is as follows. NAD-binding protein involved in the addition of a carboxymethylaminomethyl (cmnm) group at the wobble position (U34) of certain tRNAs, forming tRNA-cmnm(5)s(2)U34. This chain is tRNA uridine 5-carboxymethylaminomethyl modification enzyme MnmG, found in Acinetobacter baumannii (strain SDF).